Consider the following 2021-residue polypeptide: HEAT repeat-containing protein 5A (2021 aa).

HEAT repeat units lie at residues 795-836 and 1059-1096; these read SQRP…HLAS and VNLS…REAA. Disordered regions lie at residues 1503–1528 and 1989–2012; these read EGNG…LPAD and RGNQ…HGSP. Over residues 1512-1522 the composition is skewed to polar residues; the sequence is VTPTSMGQERG.

This sequence belongs to the HEATR5 family.

This is HEAT repeat-containing protein 5A (heatr5a) from Xenopus tropicalis (Western clawed frog).